Reading from the N-terminus, the 22-residue chain is Lantibiotic mutacin B-Ny266 (22 aa).

A cross-link (lanthionine (Ser-Cys)) is located at residues 3-7 (SWSFC). Serine 5 carries the post-translational modification 2,3-didehydroalanine (Ser). A cross-link (beta-methyllanthionine (Thr-Cys)) is located at residues 8-11 (TPGC). Threonine 14 carries the post-translational modification 2,3-didehydrobutyrine. Positions 16-21 (SFNSYC) form a cross-link, lanthionine (Ser-Cys). Positions 19–22 (SYCC) form a cross-link, S-(2-aminovinyl)-D-cysteine (Ser-Cys).

Maturation of lantibiotics involves the enzymatic conversion of Thr, and Ser into dehydrated AA and the formation of thioether bonds with cysteine. The C-terminal lanthionine undergoes decarboxylation. This is followed by membrane translocation and cleavage of the modified precursor. Post-translationally, it is not established whether the 2,3-didehydrobutyrine is the E- or Z-isomer.

Lanthionine-containing peptide antibiotic (lantibiotic) active on Gram-positive bacteria. The bactericidal activity of lantibiotics is based on depolarization of energized bacterial cytoplasmic membranes, initiated by the formation of aqueous transmembrane pores. In Streptococcus mutans, this protein is Lantibiotic mutacin B-Ny266.